A 276-amino-acid polypeptide reads, in one-letter code: Cytoskeleton protein RodZ (276 aa).

The Cytoplasmic segment spans residues 1–110 (MTSMRKKTIG…SSKKKKKKTS (110 aa)). The chain crosses the membrane as a helical; Signal-anchor for type II membrane protein span at residues 111–131 (FLPLFYFILFALSILIFVTYY). The Extracellular portion of the chain corresponds to 132-276 (VWNYIQTQPE…GQITVTFTKN (145 aa)).

The protein belongs to the RodZ family. As to quaternary structure, interacts with MltG and MreC in the elongasome. Interacts with KhpB (also called EloR/Jag).

It localises to the cell membrane. Its function is as follows. Cytoskeletal protein that is involved in cell-shape control through regulation of the length of the long axis. Probably part of the elongasome which synthesizes peripheral peptidoglycan. In Streptococcus pneumoniae (strain ATCC BAA-255 / R6), this protein is Cytoskeleton protein RodZ.